We begin with the raw amino-acid sequence, 714 residues long: Fatty acid oxidation complex subunit alpha (714 aa).

Positions M1–P190 are enoyl-CoA hydratase. Residues A306–Q714 are 3-hydroxyacyl-CoA dehydrogenase.

It in the N-terminal section; belongs to the enoyl-CoA hydratase/isomerase family. This sequence in the central section; belongs to the 3-hydroxyacyl-CoA dehydrogenase family. As to quaternary structure, heterotetramer of two alpha chains (FadJ) and two beta chains (FadI).

It is found in the cytoplasm. It catalyses the reaction a (3S)-3-hydroxyacyl-CoA = a (2E)-enoyl-CoA + H2O. The enzyme catalyses a 4-saturated-(3S)-3-hydroxyacyl-CoA = a (3E)-enoyl-CoA + H2O. The catalysed reaction is a (3S)-3-hydroxyacyl-CoA + NAD(+) = a 3-oxoacyl-CoA + NADH + H(+). It carries out the reaction (3S)-3-hydroxybutanoyl-CoA = (3R)-3-hydroxybutanoyl-CoA. Its pathway is lipid metabolism; fatty acid beta-oxidation. Functionally, catalyzes the formation of a hydroxyacyl-CoA by addition of water on enoyl-CoA. Also exhibits 3-hydroxyacyl-CoA epimerase and 3-hydroxyacyl-CoA dehydrogenase activities. In Escherichia coli (strain SE11), this protein is Fatty acid oxidation complex subunit alpha.